The following is a 557-amino-acid chain: Formate--tetrahydrofolate ligase (557 aa).

67-74 (TPAGEGKS) contributes to the ATP binding site.

Belongs to the formate--tetrahydrofolate ligase family.

The catalysed reaction is (6S)-5,6,7,8-tetrahydrofolate + formate + ATP = (6R)-10-formyltetrahydrofolate + ADP + phosphate. It functions in the pathway one-carbon metabolism; tetrahydrofolate interconversion. This chain is Formate--tetrahydrofolate ligase, found in Latilactobacillus sakei subsp. sakei (strain 23K) (Lactobacillus sakei subsp. sakei).